A 408-amino-acid polypeptide reads, in one-letter code: LL-diaminopimelate aminotransferase (408 aa).

Positions 15 and 42 each coordinate substrate. Pyridoxal 5'-phosphate is bound by residues tyrosine 72, 108–109 (SK), tyrosine 132, asparagine 187, tyrosine 218, and 246–248 (SFS). Residues lysine 109, tyrosine 132, and asparagine 187 each contribute to the substrate site. The residue at position 249 (lysine 249) is an N6-(pyridoxal phosphate)lysine. 2 residues coordinate pyridoxal 5'-phosphate: arginine 257 and asparagine 292. 2 residues coordinate substrate: asparagine 292 and arginine 388.

The protein belongs to the class-I pyridoxal-phosphate-dependent aminotransferase family. LL-diaminopimelate aminotransferase subfamily. Homodimer. Requires pyridoxal 5'-phosphate as cofactor.

It carries out the reaction (2S,6S)-2,6-diaminopimelate + 2-oxoglutarate = (S)-2,3,4,5-tetrahydrodipicolinate + L-glutamate + H2O + H(+). The protein operates within amino-acid biosynthesis; L-lysine biosynthesis via DAP pathway; LL-2,6-diaminopimelate from (S)-tetrahydrodipicolinate (aminotransferase route): step 1/1. Involved in the synthesis of meso-diaminopimelate (m-DAP or DL-DAP), required for both lysine and peptidoglycan biosynthesis. Catalyzes the direct conversion of tetrahydrodipicolinate to LL-diaminopimelate. Is also able to catalyze the reverse reaction in vitro, i.e. the transamination of LL-diaminopimelate with 2-oxoglutarate to produce tetrahydrodipicolinate and glutamate. Cannot use m-DAP, lysine or ornithine as the amino-group donor, when using 2-oxoglutarate as the amino-group acceptor. Cannot use pyruvate, indole 3-pyruvate, oxaloacetate or phenyl pyruvate as the amino-group acceptor, when using LL-DAP as the amino-group donor. The polypeptide is LL-diaminopimelate aminotransferase (Leptospira interrogans serogroup Icterohaemorrhagiae serovar copenhageni (strain Fiocruz L1-130)).